The primary structure comprises 237 residues: BTB/POZ domain-containing protein KCTD6 (237 aa).

Positions 12–81 constitute a BTB domain; sequence HPVTLNVGGH…LRTSELTLPV (70 aa).

Homopentamer. May be part of a cullin-containing E3 ubiquitin-protein ligase complex.

The protein operates within protein modification; protein ubiquitination. Its function is as follows. Probable substrate-specific adapter of a cullin-containing E3 ubiquitin-protein ligase complex mediating the ubiquitination and subsequent proteasomal degradation of target proteins. The sequence is that of BTB/POZ domain-containing protein KCTD6 (kctd6) from Danio rerio (Zebrafish).